Consider the following 92-residue polypeptide: Small ribosomal subunit protein uS19 (92 aa).

This sequence belongs to the universal ribosomal protein uS19 family.

Protein S19 forms a complex with S13 that binds strongly to the 16S ribosomal RNA. The polypeptide is Small ribosomal subunit protein uS19 (Rickettsia africae (strain ESF-5)).